A 469-amino-acid chain; its full sequence is Collagenase 3 (469 aa).

Residues 1 to 17 (SSLSVLVLSLSFAYCLS) form the signal peptide. Residues 18–100 (APVPQDEDSE…QPRCGVPDVG (83 aa)) constitute a propeptide, activation peptide. A Cysteine switch motif is present at residues 92–99 (PRCGVPDV). Cysteine 94 is a Zn(2+) binding site. Asparagine 115 is a glycosylation site (N-linked (GlcNAc...) asparagine). Aspartate 126 is a binding site for Ca(2+). Asparagine 150 is a glycosylation site (N-linked (GlcNAc...) asparagine). Aspartate 160 contacts Ca(2+). The Zn(2+) site is built by histidine 170 and aspartate 172. The Ca(2+) site is built by aspartate 177, glycine 178, and leucine 182. Histidine 185 is a binding site for Zn(2+). 2 residues coordinate Ca(2+): glycine 194 and aspartate 196. Histidine 198 provides a ligand contact to Zn(2+). Positions 200, 201, and 203 each coordinate Ca(2+). Residue histidine 220 coordinates Zn(2+). The active site involves glutamate 221. Residues histidine 224, histidine 230, and methionine 238 each contribute to the Zn(2+) site. The segment at 266–469 (PGNRDPHPKH…ILKTNFVLMC (204 aa)) is interaction with collagen. Hemopexin repeat units lie at residues 279-328 (PEKC…WPEL), 329-375 (PNKL…GFPK), 377-425 (LKAI…FPGI), and 426-469 (GEKV…VLMC). Cysteine 282 and cysteine 469 form a disulfide bridge. Positions 289, 291, 333, 335, 383, and 430 each coordinate Ca(2+).

The protein belongs to the peptidase M10A family. Ca(2+) serves as cofactor. It depends on Zn(2+) as a cofactor. In terms of processing, the proenzyme is activated by removal of the propeptide; this cleavage can be effected by other matrix metalloproteinases and may involve several cleavage steps. Cleavage can also be autocatalytic, after partial maturation by another protease or after treatment with 4-aminophenylmercuric acetate (APMA) (in vitro).

The protein resides in the secreted. The protein localises to the extracellular space. Its subcellular location is the extracellular matrix. In terms of biological role, plays a role in the degradation of extracellular matrix proteins including fibrillar collagen, fibronectin, TNC and ACAN. Cleaves several types of triple helical collagen. May also function by activating or degrading key regulatory proteins. Plays a role in wound healing, tissue remodeling, cartilage degradation, bone development, bone mineralization and ossification. The protein is Collagenase 3 (mmp13) of Xenopus laevis (African clawed frog).